The sequence spans 339 residues: DNA-directed RNA polymerase subunit alpha (339 aa).

Residues methionine 1–glutamate 235 form an alpha N-terminal domain (alpha-NTD) region. Residues phenylalanine 251–tyrosine 339 are alpha C-terminal domain (alpha-CTD).

It belongs to the RNA polymerase alpha chain family. As to quaternary structure, homodimer. The RNAP catalytic core consists of 2 alpha, 1 beta, 1 beta' and 1 omega subunit. When a sigma factor is associated with the core the holoenzyme is formed, which can initiate transcription.

It catalyses the reaction RNA(n) + a ribonucleoside 5'-triphosphate = RNA(n+1) + diphosphate. Its function is as follows. DNA-dependent RNA polymerase catalyzes the transcription of DNA into RNA using the four ribonucleoside triphosphates as substrates. The protein is DNA-directed RNA polymerase subunit alpha of Rhodopseudomonas palustris (strain BisB5).